A 151-amino-acid polypeptide reads, in one-letter code: MLVYGLYKSPLGYITVAKDDKGFIMLDFCDCVEGNSRDDSSFTEFFHKLDLYFEGKPINLREPINLKTYPFRLSVFKEVMKIPWGKVMPYKQIADSLGTSPRAVGMALSKNPILLIIPCHRVIAENGIGGYSRGVKLKRALLELEGVKIPE.

C119 serves as the catalytic Nucleophile; methyl group acceptor.

The protein belongs to the MGMT family.

It localises to the cytoplasm. It catalyses the reaction a 6-O-methyl-2'-deoxyguanosine in DNA + L-cysteinyl-[protein] = S-methyl-L-cysteinyl-[protein] + a 2'-deoxyguanosine in DNA. The enzyme catalyses a 4-O-methyl-thymidine in DNA + L-cysteinyl-[protein] = a thymidine in DNA + S-methyl-L-cysteinyl-[protein]. Its function is as follows. Involved in the cellular defense against the biological effects of O6-methylguanine (O6-MeG) and O4-methylthymine (O4-MeT) in DNA. Repairs the methylated nucleobase in DNA by stoichiometrically transferring the methyl group to a cysteine residue in the enzyme. This is a suicide reaction: the enzyme is irreversibly inactivated. The polypeptide is Methylated-DNA--protein-cysteine methyltransferase (Saccharolobus islandicus (strain Y.N.15.51 / Yellowstone #2) (Sulfolobus islandicus)).